The chain runs to 661 residues: COBRA-like protein 7 (661 aa).

The first 26 residues, 1-26, serve as a signal peptide directing secretion; that stretch reads MDSAPNFIPRLLLLSLLIVSIPLTSS. Residues 26–45 are disordered; that stretch reads SQSDANTTNPSPSPPSDSDL. Asparagine 31, asparagine 64, asparagine 122, asparagine 170, asparagine 314, asparagine 327, asparagine 356, asparagine 369, asparagine 398, asparagine 410, asparagine 430, asparagine 472, asparagine 551, and asparagine 561 each carry an N-linked (GlcNAc...) asparagine glycan. Serine 637 is lipidated: GPI-anchor amidated serine. Positions 638-661 are cleaved as a propeptide — removed in mature form; sequence SQHRKHISVFLLALPVLALLILRA.

This sequence belongs to the COBRA family. Expressed in roots, stems, leaves, flowers and siliques.

Its subcellular location is the cell membrane. The polypeptide is COBRA-like protein 7 (COBL7) (Arabidopsis thaliana (Mouse-ear cress)).